We begin with the raw amino-acid sequence, 257 residues long: Gene 3 protein (257 aa).

Residues 163–176 (STENLLGQTQSSTH) show a composition bias toward polar residues. The disordered stretch occupies residues 163–257 (STENLLGQTQ…SDSSVSSVFF (95 aa)). Basic and acidic residues predominate over residues 214 to 240 (SIREETVSGMARAREECNSPSEHDRLT).

This chain is Gene 3 protein, found in Equine herpesvirus 1 (strain Ab4p) (EHV-1).